Here is a 134-residue protein sequence, read N- to C-terminus: S-protein homolog 18 (134 aa).

The signal sequence occupies residues 1–25 (MCPSSFRLILSVILIAFLFVGLCEA). Asn-87 is a glycosylation site (N-linked (GlcNAc...) asparagine).

The protein belongs to the plant self-incompatibility (S1) protein family.

The protein resides in the secreted. The sequence is that of S-protein homolog 18 from Arabidopsis thaliana (Mouse-ear cress).